We begin with the raw amino-acid sequence, 533 residues long: Retinoid isomerohydrolase (533 aa).

Position 2 is an N-acetylserine (S2). Residues T101 and T105 each carry the phosphothreonine modification. C112 carries the S-palmitoyl cysteine; in membrane form lipid modification. K113 carries the N6-acetyllysine modification. A Phosphoserine modification is found at S117. H180 is a binding site for Fe cation. A lipid anchor (S-palmitoyl cysteine; in membrane form) is attached at C231. 2 residues coordinate Fe cation: H241 and H313. Residues C329 and C330 are each lipidated (S-palmitoyl cysteine; in membrane form). Position 527 (H527) interacts with Fe cation.

This sequence belongs to the carotenoid oxygenase family. Interacts with MYO7A; this mediates light-dependent intracellular transport of RPE65. Fe(2+) is required as a cofactor. Post-translationally, palmitoylation by LRAT regulates ligand binding specificity; the palmitoylated form (membrane form) specifically binds all-trans-retinyl-palmitate, while the soluble unpalmitoylated form binds all-trans-retinol (vitamin A). Retinal pigment epithelium specific.

It is found in the cytoplasm. The protein localises to the cell membrane. The protein resides in the microsome membrane. The catalysed reaction is an all-trans-retinyl ester + H2O = 11-cis-retinol + a fatty acid + H(+). The enzyme catalyses lutein = (3R,3'S)-zeaxanthin. It catalyses the reaction all-trans-retinyl hexadecanoate + H2O = 11-cis-retinol + hexadecanoate + H(+). Functionally, critical isomerohydrolase in the retinoid cycle involved in regeneration of 11-cis-retinal, the chromophore of rod and cone opsins. Catalyzes the cleavage and isomerization of all-trans-retinyl fatty acid esters to 11-cis-retinol which is further oxidized by 11-cis retinol dehydrogenase to 11-cis-retinal for use as visual chromophore. Essential for the production of 11-cis retinal for both rod and cone photoreceptors. Also capable of catalyzing the isomerization of lutein to meso-zeaxanthin an eye-specific carotenoid. The soluble form binds vitamin A (all-trans-retinol), making it available for LRAT processing to all-trans-retinyl ester. The membrane form, palmitoylated by LRAT, binds all-trans-retinyl esters, making them available for IMH (isomerohydrolase) processing to all-cis-retinol. The soluble form is regenerated by transferring its palmitoyl groups onto 11-cis-retinol, a reaction catalyzed by LRAT. This chain is Retinoid isomerohydrolase (RPE65), found in Chlorocebus aethiops (Green monkey).